The chain runs to 461 residues: Photosystem II CP43 reaction center protein (461 aa).

A propeptide spanning residues 1–2 (ME) is cleaved from the precursor. Threonine 3 bears the N-acetylthreonine mark. Threonine 3 carries the post-translational modification Phosphothreonine. Transmembrane regions (helical) follow at residues 57–81 (LFEVAHFIPEKPMYEQGLILLPHLA), 122–143 (LIGPETLEESFPFFGYVWKDKN), 166–188 (KAMYFGGLFDPWSVGGGDVRVIT), 243–263 (KPWAWARRAFVWSGEAYLSYS), and 279–300 (WFNNTVYPSEFYGPTGPEASQS). Glutamate 355 lines the [CaMn4O5] cluster pocket. The helical transmembrane segment at 435–459 (RARAAAAGFEKGIDRDNEPVLSMKP) threads the bilayer.

This sequence belongs to the PsbB/PsbC family. PsbC subfamily. PSII is composed of 1 copy each of membrane proteins PsbA, PsbB, PsbC, PsbD, PsbE, PsbF, PsbH, PsbI, PsbJ, PsbK, PsbL, PsbM, PsbT, PsbX, PsbY, PsbZ, Psb30/Ycf12, at least 3 peripheral proteins of the oxygen-evolving complex and a large number of cofactors. It forms dimeric complexes. The cofactor is Binds multiple chlorophylls and provides some of the ligands for the Ca-4Mn-5O cluster of the oxygen-evolving complex. It may also provide a ligand for a Cl- that is required for oxygen evolution. PSII binds additional chlorophylls, carotenoids and specific lipids..

Its subcellular location is the plastid. It localises to the chloroplast thylakoid membrane. One of the components of the core complex of photosystem II (PSII). It binds chlorophyll and helps catalyze the primary light-induced photochemical processes of PSII. PSII is a light-driven water:plastoquinone oxidoreductase, using light energy to abstract electrons from H(2)O, generating O(2) and a proton gradient subsequently used for ATP formation. This is Photosystem II CP43 reaction center protein from Tupiella akineta (Green alga).